The following is a 394-amino-acid chain: Elongation factor Tu (394 aa).

The 195-residue stretch at 10–204 (KPHVNVGTIG…HLDSYIPEPE (195 aa)) folds into the tr-type G domain. A G1 region spans residues 19 to 26 (GHVDHGKT). A GTP-binding site is contributed by 19 to 26 (GHVDHGKT). Thr26 serves as a coordination point for Mg(2+). A G2 region spans residues 60–64 (GITIN). Residues 81–84 (DCPG) are G3. GTP-binding positions include 81–85 (DCPGH) and 136–139 (NKCD). Residues 136-139 (NKCD) are G4. Residues 174-176 (SAL) form a G5 region.

It belongs to the TRAFAC class translation factor GTPase superfamily. Classic translation factor GTPase family. EF-Tu/EF-1A subfamily. As to quaternary structure, monomer.

The protein localises to the cytoplasm. The enzyme catalyses GTP + H2O = GDP + phosphate + H(+). In terms of biological role, GTP hydrolase that promotes the GTP-dependent binding of aminoacyl-tRNA to the A-site of ribosomes during protein biosynthesis. In Cronobacter sakazakii (strain ATCC BAA-894) (Enterobacter sakazakii), this protein is Elongation factor Tu.